Consider the following 527-residue polypeptide: NAD(P)H-quinone oxidoreductase chain 4 1 (527 aa).

13 helical membrane passes run F6 to I26, W36 to S56, L91 to F111, P113 to V133, L136 to I156, F169 to F189, L212 to H232, T243 to L263, A275 to T295, I306 to D326, G331 to G351, L387 to T407, and V417 to M437.

It belongs to the complex I subunit 4 family.

Its subcellular location is the cellular thylakoid membrane. It catalyses the reaction a plastoquinone + NADH + (n+1) H(+)(in) = a plastoquinol + NAD(+) + n H(+)(out). The catalysed reaction is a plastoquinone + NADPH + (n+1) H(+)(in) = a plastoquinol + NADP(+) + n H(+)(out). Functionally, NDH-1 shuttles electrons from NAD(P)H, via FMN and iron-sulfur (Fe-S) centers, to quinones in the respiratory chain. The immediate electron acceptor for the enzyme in this species is believed to be plastoquinone. Couples the redox reaction to proton translocation (for every two electrons transferred, four hydrogen ions are translocated across the cytoplasmic membrane), and thus conserves the redox energy in a proton gradient. In Microcystis aeruginosa (strain NIES-843 / IAM M-2473), this protein is NAD(P)H-quinone oxidoreductase chain 4 1.